A 911-amino-acid chain; its full sequence is Gem-associated protein 4a (911 aa).

As to quaternary structure, component of the core survival motor neuron (SMN) complex composed of Smn, Gem2, Gem3, rig/Gem5 and one of 3 almost identical Gem4 paralogs encoded by Glos/Gem4a, Gem4b or Gem4c. Interacts with Smn; the interaction is probably indirect.

In terms of biological role, component of the survival motor neuron (SMN) complex that catalyzes the assembly of small nuclear ribonucleoproteins (snRNPs), the building blocks of the spliceosome, and thereby plays an important role in the splicing of cellular pre-mRNAs. One of 3 almost identical paralogs (Glos/Gem4a, Gem4b and Gem4c), resulting from a genomic triplication, that have some redundant function. Required for neuromuscular function and organismal viability. This is Gem-associated protein 4a from Drosophila melanogaster (Fruit fly).